The sequence spans 221 residues: Orotate phosphoribosyltransferase (221 aa).

Lys-27 is a binding site for 5-phospho-alpha-D-ribose 1-diphosphate. Position 35–36 (Phe-35–Phe-36) interacts with orotate. 5-phospho-alpha-D-ribose 1-diphosphate is bound by residues Tyr-75 to Lys-76, Arg-102, Lys-103, Lys-106, His-108, and Asp-128 to Ala-136. Positions 132 and 160 each coordinate orotate.

This sequence belongs to the purine/pyrimidine phosphoribosyltransferase family. PyrE subfamily. Homodimer. Mg(2+) is required as a cofactor.

The catalysed reaction is orotidine 5'-phosphate + diphosphate = orotate + 5-phospho-alpha-D-ribose 1-diphosphate. The protein operates within pyrimidine metabolism; UMP biosynthesis via de novo pathway; UMP from orotate: step 1/2. Its function is as follows. Catalyzes the transfer of a ribosyl phosphate group from 5-phosphoribose 1-diphosphate to orotate, leading to the formation of orotidine monophosphate (OMP). This chain is Orotate phosphoribosyltransferase, found in Dichelobacter nodosus (strain VCS1703A).